A 345-amino-acid chain; its full sequence is L-Ala-D/L-Glu epimerase (345 aa).

Substrate contacts are provided by threonine 134 and lysine 159. Lysine 161 serves as the catalytic Proton acceptor; specific for (R)-substrate epimerization. Aspartate 188 contributes to the Mg(2+) binding site. A substrate-binding site is contributed by asparagine 190. The Mg(2+) site is built by glutamate 216 and aspartate 241. Lysine 265 (proton acceptor; specific for (S)-substrate epimerization) is an active-site residue. 3 residues coordinate substrate: cysteine 292, aspartate 317, and aspartate 319.

Belongs to the mandelate racemase/muconate lactonizing enzyme family. Requires Mg(2+) as cofactor.

It catalyses the reaction L-alanyl-L-glutamate = L-alanyl-D-glutamate. Its pathway is cell wall degradation; peptidoglycan degradation. Catalyzes the epimerization of L-Ala-D-Glu to L-Ala-L-Glu and has probably a role in the metabolism of the murein peptide, of which L-Ala-D-Glu is a component. Is also able to catalyze the reverse reaction and the epimerization of a broad range of other dipeptides; is most efficient with L-Ala-D/L-Phe, L-Ala-D/L-Tyr, and L-Ala-D/L-His. This Thermotoga maritima (strain ATCC 43589 / DSM 3109 / JCM 10099 / NBRC 100826 / MSB8) protein is L-Ala-D/L-Glu epimerase.